A 134-amino-acid polypeptide reads, in one-letter code: Large ribosomal subunit protein bL12 (134 aa).

The protein belongs to the bacterial ribosomal protein bL12 family. As to quaternary structure, homodimer. Part of the ribosomal stalk of the 50S ribosomal subunit. Forms a multimeric L10(L12)X complex, where L10 forms an elongated spine to which 2 to 4 L12 dimers bind in a sequential fashion. Binds GTP-bound translation factors.

Forms part of the ribosomal stalk which helps the ribosome interact with GTP-bound translation factors. Is thus essential for accurate translation. The polypeptide is Large ribosomal subunit protein bL12 (Chlamydia abortus (strain DSM 27085 / S26/3) (Chlamydophila abortus)).